A 236-amino-acid chain; its full sequence is tRNA (guanine-N(7)-)-methyltransferase (236 aa).

Residues D35, E60, N87, and D113 each coordinate S-adenosyl-L-methionine. The active site involves D113. 2 residues coordinate substrate: K117 and D149.

The protein belongs to the class I-like SAM-binding methyltransferase superfamily. TrmB family.

It carries out the reaction guanosine(46) in tRNA + S-adenosyl-L-methionine = N(7)-methylguanosine(46) in tRNA + S-adenosyl-L-homocysteine. Its pathway is tRNA modification; N(7)-methylguanine-tRNA biosynthesis. Catalyzes the formation of N(7)-methylguanine at position 46 (m7G46) in tRNA. The sequence is that of tRNA (guanine-N(7)-)-methyltransferase from Parasynechococcus marenigrum (strain WH8102).